A 512-amino-acid polypeptide reads, in one-letter code: Cytochrome P450 monooxygenase astB (512 aa).

The chain crosses the membrane as a helical span at residues 5–25 (DLSFPAAIGAVFGAVAISVAA). Position 452 (C452) interacts with heme.

Belongs to the cytochrome P450 family. It depends on heme as a cofactor.

It is found in the membrane. The protein operates within secondary metabolite biosynthesis; terpenoid biosynthesis. Its function is as follows. Cytochrome P450 monooxygenase; part of the gene cluster that mediates the biosynthesis of the sesquiterpenoid aspterric acid (AA), an inhibitor of dihydroxy-acid dehydratase (DHAD) effective as an herbicide. AstB catalyzes the second step within the pathway and converts (-)-daucane produced by the terpene cyclase astA into an alpha-epoxy carboxylate intermediate which is further converted into the tricyclic aspterric acid by the cytochrome P450 monooxygenase astC. This is Cytochrome P450 monooxygenase astB from Aspergillus terreus (strain NIH 2624 / FGSC A1156).